The chain runs to 617 residues: Syncytin-A (617 aa).

The signal sequence occupies residues 1–17 (MVRPWVFCLLLFPCSSA). At 18-544 (YSDSWMPLVN…WIQWLGLGPW (527 aa)) the chain is on the extracellular side. Asn27 is a glycosylation site (N-linked (GlcNAc...) asparagine). Residues 44–47 (CWVC) carry the CXXC motif. Cystine bridges form between Cys44–Cys47, Cys44–Cys505, and Cys497–Cys504. N-linked (GlcNAc...) asparagine glycans are attached at residues Asn272 and Asn365. Residues 420 to 440 (LLPLLAGLGIASALGLGIAGI) form a fusion peptide region. Residues 497–505 (CLFLQEECC) carry the CX6CC motif. The chain crosses the membrane as a helical span at residues 545–565 (LPSWLTSLMAPILFILVLLVF). At 566 to 617 (RPCLLNCLTHSVSRRMSSFIHTTTEGHVDKILLLRESQYKRLPQEPPEEDAV) the chain is on the cytoplasmic side.

This sequence belongs to the gamma type-C retroviral envelope protein family. The mature protein consists of a trimer of SU-TM heterodimers. The SU-TM heterodimers are attached by a labile interchain disulfide bond. In terms of processing, synthesized as an inactive precursor that is heavily N-glycosylated and processed likely by furin in the Golgi to yield the mature SU and TM proteins. The cleavage site between SU and TM requires the minimal sequence [KR]-X-[KR]-R. The CXXC motif is highly conserved across a broad range of retroviral envelope proteins. It is thought to participate in the formation of a labile disulfide bond possibly with the CX6CC motif present in the transmembrane protein. Isomerization of the intersubunit disulfide bond to an SU intrachain disulfide bond is thought to occur upon receptor recognition in order to allow membrane fusion. In terms of tissue distribution, highly expressed in placenta where it localizes to syncytiotrophoblasts of the labyrinthine zona. Specifically localizes to syncytiotrophoblast layer I (SynT-I). Also detected at very low levels in hippocampus, brain, testis and ovary.

Its subcellular location is the cell membrane. Functionally, this endogenous retroviral envelope protein has retained its original fusogenic properties. Together with Synb, participates in trophoblast fusion and the formation of a syncytium during placenta morphogenesis. Syna is essential for placental development and is specifically required for formation of syncytiotrophoblast layer I (SynT-I). Promotes muscle myoblast fusion. Does not have immunosuppressive activity. In Mus musculus (Mouse), this protein is Syncytin-A.